A 362-amino-acid chain; its full sequence is Peptide chain release factor 1 (362 aa).

Q240 is modified (N5-methylglutamine).

It belongs to the prokaryotic/mitochondrial release factor family. In terms of processing, methylated by PrmC. Methylation increases the termination efficiency of RF1.

Its subcellular location is the cytoplasm. Peptide chain release factor 1 directs the termination of translation in response to the peptide chain termination codons UAG and UAA. The polypeptide is Peptide chain release factor 1 (Bifidobacterium adolescentis (strain ATCC 15703 / DSM 20083 / NCTC 11814 / E194a)).